The following is a 503-amino-acid chain: Probable cytosol aminopeptidase (503 aa).

Positions 270 and 275 each coordinate Mn(2+). The active site involves K282. Mn(2+) is bound by residues D293, D352, and E354. R356 is a catalytic residue.

This sequence belongs to the peptidase M17 family. Requires Mn(2+) as cofactor.

Its subcellular location is the cytoplasm. The catalysed reaction is Release of an N-terminal amino acid, Xaa-|-Yaa-, in which Xaa is preferably Leu, but may be other amino acids including Pro although not Arg or Lys, and Yaa may be Pro. Amino acid amides and methyl esters are also readily hydrolyzed, but rates on arylamides are exceedingly low.. It catalyses the reaction Release of an N-terminal amino acid, preferentially leucine, but not glutamic or aspartic acids.. Presumably involved in the processing and regular turnover of intracellular proteins. Catalyzes the removal of unsubstituted N-terminal amino acids from various peptides. This chain is Probable cytosol aminopeptidase, found in Erwinia tasmaniensis (strain DSM 17950 / CFBP 7177 / CIP 109463 / NCPPB 4357 / Et1/99).